Here is a 956-residue protein sequence, read N- to C-terminus: Outer capsid protein VP2 (956 aa).

It belongs to the orbivirus VP2 family.

It localises to the virion. Its function is as follows. The VP2 protein is one of the two proteins (with VP5) which constitute the virus particle outer capsid. It is the major target of the host immunogenic response. Responsible for viral attachment to target host cell, probably by binding to sialic acid. This attachment induces virion internalization predominantly through clathrin-dependent endocytosis. In Bluetongue virus 10 (isolate USA) (BTV 10), this protein is Outer capsid protein VP2 (Segment-2).